A 116-amino-acid polypeptide reads, in one-letter code: Large ribosomal subunit protein uL18 (116 aa).

Belongs to the universal ribosomal protein uL18 family. In terms of assembly, part of the 50S ribosomal subunit; part of the 5S rRNA/L5/L18/L25 subcomplex. Contacts the 5S and 23S rRNAs.

Functionally, this is one of the proteins that bind and probably mediate the attachment of the 5S RNA into the large ribosomal subunit, where it forms part of the central protuberance. The polypeptide is Large ribosomal subunit protein uL18 (Shewanella piezotolerans (strain WP3 / JCM 13877)).